The sequence spans 264 residues: Thymidylate synthase (264 aa).

Residue arginine 21 coordinates dUMP. Histidine 51 provides a ligand contact to (6R)-5,10-methylene-5,6,7,8-tetrahydrofolate. Arginine 126–arginine 127 contacts dUMP. Catalysis depends on cysteine 146, which acts as the Nucleophile. DUMP is bound by residues arginine 166–aspartate 169, asparagine 177, and histidine 207–tyrosine 209. Aspartate 169 lines the (6R)-5,10-methylene-5,6,7,8-tetrahydrofolate pocket. Residue alanine 263 participates in (6R)-5,10-methylene-5,6,7,8-tetrahydrofolate binding.

This sequence belongs to the thymidylate synthase family. Bacterial-type ThyA subfamily. As to quaternary structure, homodimer.

The protein localises to the cytoplasm. It carries out the reaction dUMP + (6R)-5,10-methylene-5,6,7,8-tetrahydrofolate = 7,8-dihydrofolate + dTMP. The protein operates within pyrimidine metabolism; dTTP biosynthesis. Functionally, catalyzes the reductive methylation of 2'-deoxyuridine-5'-monophosphate (dUMP) to 2'-deoxythymidine-5'-monophosphate (dTMP) while utilizing 5,10-methylenetetrahydrofolate (mTHF) as the methyl donor and reductant in the reaction, yielding dihydrofolate (DHF) as a by-product. This enzymatic reaction provides an intracellular de novo source of dTMP, an essential precursor for DNA biosynthesis. This is Thymidylate synthase from Shigella dysenteriae serotype 1 (strain Sd197).